The sequence spans 361 residues: Holliday junction branch migration complex subunit RuvB (361 aa).

Residues M1–Y181 form a large ATPase domain (RuvB-L) region. Residues L20, R21, G62, K65, T66, T67, E128 to Y130, R171, Y181, and R218 contribute to the ATP site. T66 provides a ligand contact to Mg(2+). The small ATPAse domain (RuvB-S) stretch occupies residues T182–E252. The tract at residues H255–E361 is head domain (RuvB-H). R291, R310, and R315 together coordinate DNA.

It belongs to the RuvB family. Homohexamer. Forms an RuvA(8)-RuvB(12)-Holliday junction (HJ) complex. HJ DNA is sandwiched between 2 RuvA tetramers; dsDNA enters through RuvA and exits via RuvB. An RuvB hexamer assembles on each DNA strand where it exits the tetramer. Each RuvB hexamer is contacted by two RuvA subunits (via domain III) on 2 adjacent RuvB subunits; this complex drives branch migration. In the full resolvosome a probable DNA-RuvA(4)-RuvB(12)-RuvC(2) complex forms which resolves the HJ.

Its subcellular location is the cytoplasm. It catalyses the reaction ATP + H2O = ADP + phosphate + H(+). In terms of biological role, the RuvA-RuvB-RuvC complex processes Holliday junction (HJ) DNA during genetic recombination and DNA repair, while the RuvA-RuvB complex plays an important role in the rescue of blocked DNA replication forks via replication fork reversal (RFR). RuvA specifically binds to HJ cruciform DNA, conferring on it an open structure. The RuvB hexamer acts as an ATP-dependent pump, pulling dsDNA into and through the RuvAB complex. RuvB forms 2 homohexamers on either side of HJ DNA bound by 1 or 2 RuvA tetramers; 4 subunits per hexamer contact DNA at a time. Coordinated motions by a converter formed by DNA-disengaged RuvB subunits stimulates ATP hydrolysis and nucleotide exchange. Immobilization of the converter enables RuvB to convert the ATP-contained energy into a lever motion, pulling 2 nucleotides of DNA out of the RuvA tetramer per ATP hydrolyzed, thus driving DNA branch migration. The RuvB motors rotate together with the DNA substrate, which together with the progressing nucleotide cycle form the mechanistic basis for DNA recombination by continuous HJ branch migration. Branch migration allows RuvC to scan DNA until it finds its consensus sequence, where it cleaves and resolves cruciform DNA. This is Holliday junction branch migration complex subunit RuvB from Bartonella quintana (strain Toulouse) (Rochalimaea quintana).